A 395-amino-acid chain; its full sequence is ATP phosphoribosyltransferase regulatory subunit (395 aa).

It belongs to the class-II aminoacyl-tRNA synthetase family. HisZ subfamily. Heteromultimer composed of HisG and HisZ subunits.

Its subcellular location is the cytoplasm. It participates in amino-acid biosynthesis; L-histidine biosynthesis; L-histidine from 5-phospho-alpha-D-ribose 1-diphosphate: step 1/9. Required for the first step of histidine biosynthesis. May allow the feedback regulation of ATP phosphoribosyltransferase activity by histidine. The protein is ATP phosphoribosyltransferase regulatory subunit of Pseudomonas savastanoi pv. phaseolicola (strain 1448A / Race 6) (Pseudomonas syringae pv. phaseolicola (strain 1448A / Race 6)).